The sequence spans 516 residues: Sodium channel protein Nach (516 aa).

Over 1–49 the chain is Cytoplasmic; it reads MGHEEELSPEQVDLKVSPLMGSLKRTWNDFCATSSIHGLRYTRDEDTNR. Residues 50 to 70 traverse the membrane as a helical segment; it reads IVHFVWLLISLVMFICAVVMA. The Extracellular segment spans residues 71-452; the sequence is RTFYIDFRSN…LVSNLGSAFS (382 aa). N-linked (GlcNAc...) asparagine glycans are attached at residues asparagine 128, asparagine 165, asparagine 220, and asparagine 348. Residues 453-473 form a helical membrane-spanning segment; that stretch reads LFVGMSMLSVVEIMYYFSVIL. The Cytoplasmic segment spans residues 474–516; that stretch reads RKNYVLECEARKKMLHKGPKFAWPKANDSHSKHQKSVFIIHKM.

The protein belongs to the amiloride-sensitive sodium channel (TC 1.A.6) family.

It is found in the membrane. In terms of biological role, part of a complex that plays a role in tracheal liquid clearance. Probable role in sodium transport. This chain is Sodium channel protein Nach (Nach), found in Drosophila ananassae (Fruit fly).